A 152-amino-acid polypeptide reads, in one-letter code: Syntaxin-8A (152 aa).

Low complexity predominate over residues 1–14; sequence MNNNNNFNSNFNSN. A disordered region spans residues 1 to 22; that stretch reads MNNNNNFNSNFNSNRISSTQPY. Residues 1–131 lie on the Cytoplasmic side of the membrane; sequence MNNNNNFNSN…LTQQSKTTGY (131 aa). One can recognise a t-SNARE coiled-coil homology domain in the interval 60-122; sequence KRDMEEQDKM…RNTTKNLITL (63 aa). The helical; Anchor for type IV membrane protein transmembrane segment at 132–152 threads the bilayer; the sequence is CSAICFLLLVLLVIIILASVL.

This sequence belongs to the syntaxin family. As to quaternary structure, component of the SNARE complex composed of syn7A, syn8A, vamp7A and vti1A.

Its subcellular location is the endosome membrane. Functionally, involved in the targeting and/or fusion of transport vesicles to their target membrane during transport of proteins from the early endosome to the lysosome. Required for fusion of late endosomes with lysosomes and homotypic lysosomal fusion. In Dictyostelium discoideum (Social amoeba), this protein is Syntaxin-8A.